A 254-amino-acid chain; its full sequence is Flavin-dependent thymidylate synthase (254 aa).

The ThyX domain occupies 7–237; the sequence is LRVQLIARTE…PAVFADFEIY (231 aa). FAD-binding positions include Ser-71, 95 to 97, and Gln-103; that span reads RHR. Residues 92 to 95, 103 to 107, and Arg-176 each bind dUMP; these read ELIR and QLSQR. The ThyX motif signature appears at 95-105; that stretch reads RHRHFSYSQLS. FAD contacts are provided by residues 192–194 and His-198; that span reads NYR. DUMP is bound at residue Arg-203. Residue Arg-203 is the Involved in ionization of N3 of dUMP, leading to its activation of the active site.

The protein belongs to the thymidylate synthase ThyX family. In terms of assembly, homotetramer. FAD serves as cofactor.

It catalyses the reaction dUMP + (6R)-5,10-methylene-5,6,7,8-tetrahydrofolate + NADPH + H(+) = dTMP + (6S)-5,6,7,8-tetrahydrofolate + NADP(+). It participates in pyrimidine metabolism; dTTP biosynthesis. In terms of biological role, catalyzes the reductive methylation of 2'-deoxyuridine-5'-monophosphate (dUMP) to 2'-deoxythymidine-5'-monophosphate (dTMP) while utilizing 5,10-methylenetetrahydrofolate (mTHF) as the methyl donor, and NADPH and FADH(2) as the reductant. The chain is Flavin-dependent thymidylate synthase from Mycobacterium sp. (strain KMS).